Here is a 101-residue protein sequence, read N- to C-terminus: Small ribosomal subunit protein uS14 (101 aa).

Positions 49–70 (QSLPRDSSPSRQRNRCNQTGRP) are disordered. The span at 52–68 (PRDSSPSRQRNRCNQTG) shows a compositional bias: polar residues.

It belongs to the universal ribosomal protein uS14 family. As to quaternary structure, part of the 30S ribosomal subunit. Contacts proteins S3 and S10.

Its function is as follows. Binds 16S rRNA, required for the assembly of 30S particles and may also be responsible for determining the conformation of the 16S rRNA at the A site. This Yersinia pseudotuberculosis serotype O:1b (strain IP 31758) protein is Small ribosomal subunit protein uS14.